A 236-amino-acid polypeptide reads, in one-letter code: Purine nucleoside phosphorylase DeoD-type (236 aa).

Residue His4 participates in a purine D-ribonucleoside binding. Phosphate contacts are provided by residues Gly20, Arg24, Arg43, and 87–90; that span reads RVGT. A purine D-ribonucleoside-binding positions include 179–181 and 203–204; these read EME and SD. The Proton donor role is filled by Asp204.

This sequence belongs to the PNP/UDP phosphorylase family. As to quaternary structure, homohexamer; trimer of homodimers.

It catalyses the reaction a purine D-ribonucleoside + phosphate = a purine nucleobase + alpha-D-ribose 1-phosphate. The catalysed reaction is a purine 2'-deoxy-D-ribonucleoside + phosphate = a purine nucleobase + 2-deoxy-alpha-D-ribose 1-phosphate. Its function is as follows. Catalyzes the reversible phosphorolytic breakdown of the N-glycosidic bond in the beta-(deoxy)ribonucleoside molecules, with the formation of the corresponding free purine bases and pentose-1-phosphate. This Streptococcus thermophilus (strain ATCC BAA-491 / LMD-9) protein is Purine nucleoside phosphorylase DeoD-type.